The primary structure comprises 500 residues: Cysteine-rich secretory protein LCCL domain-containing 1 (500 aa).

A signal peptide spans 1-23; the sequence is MMCKAQEWLRVTALLFVARAVPA. Residues 66–206 enclose the SCP domain; that stretch reads LDLHNKLRSQ…PKAVYLVCNY (141 aa). A disordered region spans residues 258–281; the sequence is EIERQQSQVHDTHVRTRSDDSDRN. 2 LCCL domains span residues 289–384 and 390–492; these read MSQI…ANSF and TVQA…TGGK. 4 cysteine pairs are disulfide-bonded: Cys-295–Cys-313, Cys-317–Cys-337, Cys-396–Cys-418, and Cys-422–Cys-445.

Belongs to the CRISP family.

Its subcellular location is the secreted. In Mus musculus (Mouse), this protein is Cysteine-rich secretory protein LCCL domain-containing 1 (Crispld1).